The chain runs to 245 residues: Probable membrane transporter protein YdhB (245 aa).

8 helical membrane passes run 1–21 (MLII…GAGG), 34–56 (HIPI…LSGA), 71–91 (LIVG…TSFI), 98–118 (YLTA…LFIL), 137–157 (ILGI…APFI), 177–197 (MLVI…EGFV), 199–219 (YVLL…GAKF), and 225–245 (KVVL…LLLF).

It belongs to the 4-toluene sulfonate uptake permease (TSUP) (TC 2.A.102) family.

The protein resides in the cell membrane. The protein is Probable membrane transporter protein YdhB (ydhB) of Bacillus subtilis (strain 168).